We begin with the raw amino-acid sequence, 445 residues long: tRNA-2-methylthio-N(6)-dimethylallyladenosine synthase (445 aa).

The region spanning 3-124 (KKLYIKTYGC…LPELISKVVR (122 aa)) is the MTTase N-terminal domain. Residues Cys12, Cys48, Cys87, Cys162, Cys166, and Cys169 each contribute to the [4Fe-4S] cluster site. The region spanning 148-380 (YPQGASSFIS…QQELTAQQLA (233 aa)) is the Radical SAM core domain. One can recognise a TRAM domain in the interval 383 to 445 (ESCVGSIMKV…ASNSLTGEVI (63 aa)).

Belongs to the methylthiotransferase family. MiaB subfamily. Monomer. [4Fe-4S] cluster serves as cofactor.

The protein localises to the cytoplasm. The enzyme catalyses N(6)-dimethylallyladenosine(37) in tRNA + (sulfur carrier)-SH + AH2 + 2 S-adenosyl-L-methionine = 2-methylsulfanyl-N(6)-dimethylallyladenosine(37) in tRNA + (sulfur carrier)-H + 5'-deoxyadenosine + L-methionine + A + S-adenosyl-L-homocysteine + 2 H(+). Its function is as follows. Catalyzes the methylthiolation of N6-(dimethylallyl)adenosine (i(6)A), leading to the formation of 2-methylthio-N6-(dimethylallyl)adenosine (ms(2)i(6)A) at position 37 in tRNAs that read codons beginning with uridine. The sequence is that of tRNA-2-methylthio-N(6)-dimethylallyladenosine synthase from Rickettsia felis (strain ATCC VR-1525 / URRWXCal2) (Rickettsia azadi).